Reading from the N-terminus, the 204-residue chain is Small ribosomal subunit protein uS4 (204 aa).

The interval 25–45 (AVPSRRAYPPGQHGQARKKRS) is disordered. The S4 RNA-binding domain maps to 92–152 (MRLDNIIFRL…NKENSRRLAE (61 aa)).

This sequence belongs to the universal ribosomal protein uS4 family. As to quaternary structure, part of the 30S ribosomal subunit. Contacts protein S5. The interaction surface between S4 and S5 is involved in control of translational fidelity.

Functionally, one of the primary rRNA binding proteins, it binds directly to 16S rRNA where it nucleates assembly of the body of the 30S subunit. With S5 and S12 plays an important role in translational accuracy. The protein is Small ribosomal subunit protein uS4 of Cyanothece sp. (strain PCC 7425 / ATCC 29141).